Here is a 500-residue protein sequence, read N- to C-terminus: L-2-amino-4-chloropent-4-enoate dechlorinase/desaturase (500 aa).

Lys-311 is modified (N6-(pyridoxal phosphate)lysine).

It belongs to the trans-sulfuration enzymes family. Pyridoxal 5'-phosphate serves as cofactor.

It catalyses the reaction L-2-amino-4-chloropent-4-enoate = L-propargylglycine + chloride + H(+). Its pathway is amino-acid metabolism. It participates in antibiotic biosynthesis. Involved in the biosynthesis of terminal alkyne-containing amino acids such as L-propargylglycine (Pra) and L-beta-ethynylserine, that are produced as antibiotics by S.cattleya. Catalyzes gamma-elimination of chloride from 4-chloro-allyl-L-glycine (also named L-2-amino-4-chloropent-4-enoate), followed by an isomerization, to form the terminal-alkyne product L-propargylglycine. The protein is L-2-amino-4-chloropent-4-enoate dechlorinase/desaturase of Streptantibioticus cattleyicolor (strain ATCC 35852 / DSM 46488 / JCM 4925 / NBRC 14057 / NRRL 8057) (Streptomyces cattleya).